A 671-amino-acid chain; its full sequence is DNA ligase (671 aa).

Residues 34-38, 83-84, and E115 each bind NAD(+); these read DAEYD and SL. Catalysis depends on K117, which acts as the N6-AMP-lysine intermediate. NAD(+) contacts are provided by R138, E174, K291, and K315. Positions 409, 412, 427, and 432 each coordinate Zn(2+). The region spanning 589 to 671 is the BRCT domain; the sequence is RSGGPLTGKS…LQMIDTLEEA (83 aa).

Belongs to the NAD-dependent DNA ligase family. LigA subfamily. Requires Mg(2+) as cofactor. Mn(2+) serves as cofactor.

It carries out the reaction NAD(+) + (deoxyribonucleotide)n-3'-hydroxyl + 5'-phospho-(deoxyribonucleotide)m = (deoxyribonucleotide)n+m + AMP + beta-nicotinamide D-nucleotide.. In terms of biological role, DNA ligase that catalyzes the formation of phosphodiester linkages between 5'-phosphoryl and 3'-hydroxyl groups in double-stranded DNA using NAD as a coenzyme and as the energy source for the reaction. It is essential for DNA replication and repair of damaged DNA. The polypeptide is DNA ligase (Syntrophotalea carbinolica (strain DSM 2380 / NBRC 103641 / GraBd1) (Pelobacter carbinolicus)).